Here is a 144-residue protein sequence, read N- to C-terminus: Maximins 11/H1 (144 aa).

The N-terminal stretch at 1–18 (MNFKYIVAVSFLIASAYA) is a signal peptide. Residues 19–43 (RSEENDEQSLSQRDVLEEESLREIR) constitute a propeptide that is removed on maturation. At Asn70 the chain carries Asparagine amide. Positions 74-123 (TAEDHEVMKRLEAVMRDLDSLDYPEEASERETRGFNQEEIANLFTKKEKR) are excised as a propeptide. Leu143 bears the Leucine amide mark.

It belongs to the bombinin family. In terms of tissue distribution, expressed by the skin glands.

Its subcellular location is the secreted. Functionally, maximin-11 shows antimicrobial activity against bacteria and against the fungus C.albicans. It has little hemolytic activity. In terms of biological role, maximin-H1 shows antibacterial activity against both Gram-positive and Gram-negative bacteria. It also shows antimicrobial activity against the fungus C.albicans. Shows strong hemolytic activity. This chain is Maximins 11/H1, found in Bombina maxima (Giant fire-bellied toad).